A 437-amino-acid polypeptide reads, in one-letter code: GTPase Obg (437 aa).

The Obg domain maps to 2 to 160 (SMFLDTAKIS…RQLELELKIL (159 aa)). Positions 161-338 (ADVGLVGFPS…LLEATAELLA (178 aa)) constitute an OBG-type G domain. GTP is bound by residues 167–174 (GFPSVGKS), 192–196 (FTTIV), 214–217 (DLPG), 284–287 (NKMD), and 319–321 (SSL). Residues Ser-174 and Thr-194 each contribute to the Mg(2+) site. The region spanning 359–437 (GFAETEKNFE…IGKFEFEFVD (79 aa)) is the OCT domain.

The protein belongs to the TRAFAC class OBG-HflX-like GTPase superfamily. OBG GTPase family. As to quaternary structure, monomer. The cofactor is Mg(2+).

It is found in the cytoplasm. An essential GTPase which binds GTP, GDP and possibly (p)ppGpp with moderate affinity, with high nucleotide exchange rates and a fairly low GTP hydrolysis rate. Plays a role in control of the cell cycle, stress response, ribosome biogenesis and in those bacteria that undergo differentiation, in morphogenesis control. The polypeptide is GTPase Obg (Streptococcus pyogenes serotype M49 (strain NZ131)).